The chain runs to 420 residues: MSQPQMSPEKEQELASKILHRAELAQMTRQLKLGLSNVPSTKRKQDSTTKKRSGEDAEDVDEDHKTLLEAISPAKKPLHDDTNKMTVISPVKFVEKPNTPPSSRQRKAEDRSQQIKPRKEDTPSTPRASATPIILPHASSHYQRPHDKNFMTPKRNNNNSSNHSNNNNNIKKKAAGSKDAPQDSDNTAGADLLMYLATSPYNKSSHHGTPMAVRMPTTPRSYHYASQLSLNGNTASTSNDAVRFSHIKPSASSPQSTFKSNLLPNFPDESLMDSPSLYLSNNNGSVQATLSPQQRRKPTTNTLHPPSNVPTTPSRELNGTNFNLLRTPNFNMGDYLHNLFSPSPRVPAQQGASNTSASIPSVPAMVPGSSSNTSAIATAAISSHTTNNFLDMNANGIPLIVGPGTDRIGEGESIDDKLTD.

Ser-2 is subject to N-acetylserine. Positions 2–70 (SQPQMSPEKE…DEDHKTLLEA (69 aa)) are interaction with SWI6. A Phosphoserine modification is found at Ser-7. 2 disordered regions span residues 30–187 (QLKL…SDNT) and 273–319 (DSPS…ELNG). Positions 43-55 (RKQDSTTKKRSGE) are enriched in basic and acidic residues. Ser-72 is modified (phosphoserine). At Thr-99 the chain carries Phosphothreonine. Ser-102 carries the post-translational modification Phosphoserine. A compositionally biased stretch (basic and acidic residues) spans 106–122 (RKAEDRSQQIKPRKEDT). Residues 156–169 (NNNNSSNHSNNNNN) show a composition bias toward low complexity. Over residues 277-319 (LYLSNNNGSVQATLSPQQRRKPTTNTLHPPSNVPTTPSRELNG) the composition is skewed to polar residues. Thr-419 carries the post-translational modification Phosphothreonine.

As to quaternary structure, interacts with the ANK repeats of SWI6. The interaction with SWI6 is required for function. Interacts with SIN3. Post-translationally, phosphorylated by CDC28 in a cell cycle-dependent manner, inhibiting the interaction with SWI6.

The protein localises to the cytoplasm. It localises to the nucleus. In terms of biological role, involved in the regulation and timing of MBF-dependent transcription in late G1 of the cell cycle. This is Protein STB1 (STB1) from Saccharomyces cerevisiae (strain ATCC 204508 / S288c) (Baker's yeast).